A 307-amino-acid chain; its full sequence is Type 2A encapsulin shell protein (307 aa).

The protein belongs to the encapsulin family. Family 2A subfamily. In terms of assembly, homooligomeric. The encapsulin nanocompartment is formed by 60 subunits; monomers form pentamers which assemble to form shells. There are 12 charged pores where the pentamers meet as well as 3-fold axis channels and dimer channels.

It is found in the encapsulin nanocompartment. In terms of biological role, shell component of a type 2A encapsulin nanocompartment. Forms encapsulin nanocompartments about 24 nm in diameter from 60 monomers. Probably encapsulates at least cysteine desulfurase (CyD) and allows passage of cysteine into its interior, probably involved in sulfur metabolism. This is Type 2A encapsulin shell protein from Mycobacterium avium.